The following is a 119-amino-acid chain: Ribonuclease P protein component (119 aa).

Belongs to the RnpA family. As to quaternary structure, consists of a catalytic RNA component (M1 or rnpB) and a protein subunit.

The enzyme catalyses Endonucleolytic cleavage of RNA, removing 5'-extranucleotides from tRNA precursor.. Its function is as follows. RNaseP catalyzes the removal of the 5'-leader sequence from pre-tRNA to produce the mature 5'-terminus. It can also cleave other RNA substrates such as 4.5S RNA. The protein component plays an auxiliary but essential role in vivo by binding to the 5'-leader sequence and broadening the substrate specificity of the ribozyme. This chain is Ribonuclease P protein component, found in Streptococcus equi subsp. equi (strain 4047).